The chain runs to 208 residues: MNRQGKTPRFKRQRRLLTELPGMGKAGALERRPYPPGQHGLQRRKYSEFALQLEEKQKLRFHYGLREEQFRRLINKAKKSKATNWVEALVNLLEKRLDNVVFRLGFASSIPAARQLVSHGKVLVNGKKVNIGSQIIKVGDKITLKDEAYQNQVYMAAKQAPRLPLPSFMAKEDVAGKEQGRLTDEPNLEAVPFAFEPGLVIGYYSMRG.

One can recognise an S4 RNA-binding domain in the interval 95-160 (KRLDNVVFRL…NQVYMAAKQA (66 aa)).

The protein belongs to the universal ribosomal protein uS4 family. Part of the 30S ribosomal subunit. Contacts protein S5. The interaction surface between S4 and S5 is involved in control of translational fidelity.

Functionally, one of the primary rRNA binding proteins, it binds directly to 16S rRNA where it nucleates assembly of the body of the 30S subunit. In terms of biological role, with S5 and S12 plays an important role in translational accuracy. This chain is Small ribosomal subunit protein uS4B, found in Bdellovibrio bacteriovorus (strain ATCC 15356 / DSM 50701 / NCIMB 9529 / HD100).